Reading from the N-terminus, the 172-residue chain is L-amino acid oxidase (172 aa).

44-47 (GPMR) contributes to the FAD binding site. 2 residues coordinate substrate: Arg-47 and His-103.

Belongs to the flavin monoamine oxidase family. FIG1 subfamily. Heterodimer; non-covalently linked. It depends on FAD as a cofactor. N-glycosylated. In terms of tissue distribution, expressed by the venom gland.

It localises to the secreted. The catalysed reaction is an L-alpha-amino acid + O2 + H2O = a 2-oxocarboxylate + H2O2 + NH4(+). The enzyme catalyses L-leucine + O2 + H2O = 4-methyl-2-oxopentanoate + H2O2 + NH4(+). It carries out the reaction L-phenylalanine + O2 + H2O = 3-phenylpyruvate + H2O2 + NH4(+). It catalyses the reaction L-tryptophan + O2 + H2O = indole-3-pyruvate + H2O2 + NH4(+). The catalysed reaction is L-methionine + O2 + H2O = 4-methylsulfanyl-2-oxobutanoate + H2O2 + NH4(+). The enzyme catalyses L-isoleucine + O2 + H2O = (S)-3-methyl-2-oxopentanoate + H2O2 + NH4(+). It carries out the reaction L-arginine + O2 + H2O = 5-guanidino-2-oxopentanoate + H2O2 + NH4(+). It catalyses the reaction L-tyrosine + O2 + H2O = 3-(4-hydroxyphenyl)pyruvate + H2O2 + NH4(+). Activity is increased by Mn(2+) ions. Inhibited by Zn(2+), Ni(2+), Co(2+), Cu(2+) and Al(3+). No significant activity change by Na(+), K(+), Ca(2+), Mg(2+) and Ba(2+) ions. Both isoform are completely inhibited by L-Cys and reduced glutathione. O-phenanthroline, beta-mercaptoethanol and PMSF completely inhibit the enzymatic activity of LAAOII, but have no activity on LAAOI. Iodoacetic acid inhibits the enzymatic activity of LAAOII by 46% but has no effect on the LAAOI activity. Functionally, catalyzes an oxidative deamination of predominantly hydrophobic and aromatic L-amino acids, thus producing hydrogen peroxide that may contribute to the diverse toxic effects of this enzyme. Shows high specificity for L-Arg, L-Met, L-Phe, L-Leu, L-Tyr, L-Ile and L-Trp, low specificity for L-Val, L-Ala, L-Asn, L-Gln, and no specificity for L-Pro, L-Ser, L-Thr, L-Cys, L-Gly and L-Asp. Exhibits diverse biological activities, such as hemorrhage, hemolysis, edema, antibacterial and antiparasitic activities, as well as regulation of platelet aggregation. Its effect on platelets is controversial, since it either induces aggregation or inhibits agonist-induced aggregation. These different effects are probably due to different experimental conditions. This Cerastes cerastes (Horned desert viper) protein is L-amino acid oxidase.